A 434-amino-acid polypeptide reads, in one-letter code: Gamma-glutamyl phosphate reductase (434 aa).

Belongs to the gamma-glutamyl phosphate reductase family.

It is found in the cytoplasm. The catalysed reaction is L-glutamate 5-semialdehyde + phosphate + NADP(+) = L-glutamyl 5-phosphate + NADPH + H(+). It participates in amino-acid biosynthesis; L-proline biosynthesis; L-glutamate 5-semialdehyde from L-glutamate: step 2/2. Its function is as follows. Catalyzes the NADPH-dependent reduction of L-glutamate 5-phosphate into L-glutamate 5-semialdehyde and phosphate. The product spontaneously undergoes cyclization to form 1-pyrroline-5-carboxylate. The polypeptide is Gamma-glutamyl phosphate reductase (Nostoc sp. (strain PCC 7120 / SAG 25.82 / UTEX 2576)).